The sequence spans 214 residues: Cell division protein SepF (214 aa).

A disordered region spans residues 23 to 70 (YYDDRAPSRGFPRPRFDDGYGRYDGDDYDDPRREPADCPPPAGYRGGY). A compositionally biased stretch (basic and acidic residues) spans 36-58 (PRFDDGYGRYDGDDYDDPRREPA).

Belongs to the SepF family. As to quaternary structure, homodimer. Interacts with FtsZ.

It localises to the cytoplasm. Cell division protein that is part of the divisome complex and is recruited early to the Z-ring. Probably stimulates Z-ring formation, perhaps through the cross-linking of FtsZ protofilaments. Its function overlaps with FtsA. This is Cell division protein SepF from Mycolicibacterium paratuberculosis (strain ATCC BAA-968 / K-10) (Mycobacterium paratuberculosis).